The sequence spans 38 residues: Photosystem II reaction center protein L (38 aa).

The chain crosses the membrane as a helical span at residues 17 to 37; that stretch reads SLFWGLLLIFVLAILFSNYFF.

Belongs to the PsbL family. As to quaternary structure, PSII is composed of 1 copy each of membrane proteins PsbA, PsbB, PsbC, PsbD, PsbE, PsbF, PsbH, PsbI, PsbJ, PsbK, PsbL, PsbM, PsbT, PsbX, PsbY, PsbZ, Psb30/Ycf12, at least 3 peripheral proteins of the oxygen-evolving complex and a large number of cofactors. It forms dimeric complexes.

It localises to the plastid. Its subcellular location is the chloroplast thylakoid membrane. In terms of biological role, one of the components of the core complex of photosystem II (PSII). PSII is a light-driven water:plastoquinone oxidoreductase that uses light energy to abstract electrons from H(2)O, generating O(2) and a proton gradient subsequently used for ATP formation. It consists of a core antenna complex that captures photons, and an electron transfer chain that converts photonic excitation into a charge separation. This subunit is found at the monomer-monomer interface and is required for correct PSII assembly and/or dimerization. This is Photosystem II reaction center protein L from Chara vulgaris (Common stonewort).